A 239-amino-acid chain; its full sequence is Small ribosomal subunit protein uS3c (239 aa).

The KH type-2 domain maps to 43–139 (IKNYIQKNRK…RLNISIEKVK (97 aa)). The segment at 50-80 (NRKKGSNRKIESDSSSEVITHNRKTDSGSSS) is disordered.

This sequence belongs to the universal ribosomal protein uS3 family. Part of the 30S ribosomal subunit.

It is found in the plastid. Its subcellular location is the chloroplast. The polypeptide is Small ribosomal subunit protein uS3c (rps3) (Agrostis stolonifera (Creeping bentgrass)).